Here is a 243-residue protein sequence, read N- to C-terminus: 7-cyano-7-deazaguanine synthase (243 aa).

18 to 28 serves as a coordination point for ATP; sequence FSGGQDSATCL. Zn(2+) contacts are provided by cysteine 206, cysteine 221, cysteine 224, and cysteine 227.

Belongs to the QueC family. Zn(2+) serves as cofactor.

The enzyme catalyses 7-carboxy-7-deazaguanine + NH4(+) + ATP = 7-cyano-7-deazaguanine + ADP + phosphate + H2O + H(+). The protein operates within purine metabolism; 7-cyano-7-deazaguanine biosynthesis. In terms of biological role, catalyzes the ATP-dependent conversion of 7-carboxy-7-deazaguanine (CDG) to 7-cyano-7-deazaguanine (preQ(0)). The polypeptide is 7-cyano-7-deazaguanine synthase (Methylorubrum extorquens (strain PA1) (Methylobacterium extorquens)).